A 486-amino-acid chain; its full sequence is MKSDYNKLIFEISKEGRKAYSLPKCDVEEVNLESLIPKEFLSDKELDLPEVSEVDVIRHYTQLSNKNYGVDTGFYPLGSCTMKYNPKLNEDMAVLPGFANIHPYQPEETVQGALELMYKLDKMLAEVAGMERMTLQPAAGAHGELVGLMVIKAYHKKRGDLKRTKIIIPDSAHGTNPASAAVAGFDVVEIKSNPDGSVNIDSLKSALSDEIAGLMLTNPSTLGLFETNIKQIADLVHDAGGLLYYDGANMNAIMGVTRPGDMGFDVIHYNIHKTFSTPHGGGGPGSGPVGVRKDLVEFLPSPVIEKKGEEYVLDYDRPYSIGKIKSFYGHFGILVRAYTYILSYGPALREVSEKAVLNANYMMHKLKEKYYLPIEQVCKHEFVLGGLNEDILGVSTLDIAKRLLDYGYHPPTIYFPLIVNEAMMIEPTETESVETLDQFIDALNKIADEAKETPELLKNAPHHTHVRRIDEAKAARNLIVKWEREQ.

Residue K273 is modified to N6-(pyridoxal phosphate)lysine.

The protein belongs to the GcvP family. C-terminal subunit subfamily. The glycine cleavage system is composed of four proteins: P, T, L and H. In this organism, the P 'protein' is a heterodimer of two subunits. Requires pyridoxal 5'-phosphate as cofactor.

The catalysed reaction is N(6)-[(R)-lipoyl]-L-lysyl-[glycine-cleavage complex H protein] + glycine + H(+) = N(6)-[(R)-S(8)-aminomethyldihydrolipoyl]-L-lysyl-[glycine-cleavage complex H protein] + CO2. Its function is as follows. The glycine cleavage system catalyzes the degradation of glycine. The P protein binds the alpha-amino group of glycine through its pyridoxal phosphate cofactor; CO(2) is released and the remaining methylamine moiety is then transferred to the lipoamide cofactor of the H protein. This is Probable glycine dehydrogenase (decarboxylating) subunit 2 from Alkaliphilus oremlandii (strain OhILAs) (Clostridium oremlandii (strain OhILAs)).